Here is a 143-residue protein sequence, read N- to C-terminus: Small ribosomal subunit protein uS11c (143 aa).

It belongs to the universal ribosomal protein uS11 family. Part of the 30S ribosomal subunit.

The protein localises to the plastid. It localises to the chloroplast. In Zea mays (Maize), this protein is Small ribosomal subunit protein uS11c.